The primary structure comprises 103 residues: N(4)-acetylcytidine amidohydrolase (103 aa).

In terms of domain architecture, ASCH spans 6–101 (ITFSQRFQDD…QTQFYVIEFK (96 aa)). The active-site Proton acceptor is the K21. The active-site Nucleophile is T24. E74 acts as the Proton donor in catalysis.

It belongs to the N(4)-acetylcytidine amidohydrolase family.

It catalyses the reaction N(4)-acetylcytidine + H2O = cytidine + acetate + H(+). The catalysed reaction is N(4)-acetyl-2'-deoxycytidine + H2O = 2'-deoxycytidine + acetate + H(+). The enzyme catalyses N(4)-acetylcytosine + H2O = cytosine + acetate + H(+). Functionally, catalyzes the hydrolysis of N(4)-acetylcytidine (ac4C). The polypeptide is N(4)-acetylcytidine amidohydrolase (yqfB) (Shigella boydii serotype 4 (strain Sb227)).